The sequence spans 102 residues: Small ribosomal subunit protein uS10 (102 aa).

Belongs to the universal ribosomal protein uS10 family. Part of the 30S ribosomal subunit.

Involved in the binding of tRNA to the ribosomes. The polypeptide is Small ribosomal subunit protein uS10 (Chloroflexus aurantiacus (strain ATCC 29366 / DSM 635 / J-10-fl)).